Consider the following 147-residue polypeptide: Hemoglobin subunit epsilon (147 aa).

The region spanning 3–147 is the Globin domain; sequence HFTAEEKATI…VATALAHKYH (145 aa). A phosphoserine mark is found at Ser-14 and Ser-51. Heme b contacts are provided by His-64 and His-93.

Belongs to the globin family. Heterotetramer of two alpha chains and two epsilon chains in early embryonic hemoglobin Gower-2; two zeta chains and two epsilon chains in early embryonic hemoglobin Gower-1. As to expression, red blood cells.

Its function is as follows. The epsilon chain is a beta-type chain of early mammalian embryonic hemoglobin. The polypeptide is Hemoglobin subunit epsilon (HBE1) (Daubentonia madagascariensis (Aye-aye)).